The sequence spans 643 residues: MLLGASLVGVLLFSKLVLKLPWTQVGFSLLFLYLGSGGWRFIRVFIKTIRRDIFGGLVLLKVKAKVRQCLRERRTVPILFASTVRRHPDKTALIFEGTDTLWTFRQLDEYSSSVANFLQARGLASGDVAAIFMENRNEFVGLWLGMAKLGVEAALINTNLRRDAQLHCLTTSRARALVFGSEMASAICEIHASLDPSLSLFCSGSWEPNAVPTSTEHLDPLLKDAPKHLPICPDKGFTDKLFYIYTSGTTGLPKAAIVVHSRYYRMAALVYYGFRMRPNDIVYDCLPLYHSAGNIVGIGQCLLHGMTVVIRKKFSASRFWDDCIKYNCTIVQYIGELCRYLLNQPPREAENQHQVRMALGNGLRQSIWTNFSSRFHIPQVAEFYGATECNCSLGNFDSQVGACGFNSRILSFVYPIRLVRVNEDTMELIRGPDGICIPCQPGEPGQLVGRIIQKDPLRRFDGYLNQGANDKKIAKDVFKKGDQAYLTGDVLVMDELGYLYFRDRTGDTFRWKGENVSTTEVEGTLSRLLDMADVAVYGVEVPGTEGRAGMAAVASPTGNCDLERFAQVLEKELPLYARPIFLRLLPELHKTGTYKFQKTELRKEGFDPAIVKDPLFYLDARKGRYVPLDQEAYSRIQAGEEKL.

Transmembrane regions (helical) follow at residues 20–42 and 139–156; these read LPWT…WRFI and FVGL…AALI. Residue 243 to 254 coordinates AMP; that stretch reads YIYTSGTTGLPK.

The protein belongs to the ATP-dependent AMP-binding enzyme family.

It is found in the endoplasmic reticulum membrane. The enzyme catalyses a fatty acid(in) = a fatty acid(out). It catalyses the reaction (9Z,12Z)-octadecadienoate(out) = (9Z,12Z)-octadecadienoate(in). The catalysed reaction is (9Z)-octadecenoate(out) = (9Z)-octadecenoate(in). It carries out the reaction hexadecanoate(out) = hexadecanoate(in). The enzyme catalyses a long-chain fatty acid + ATP + CoA = a long-chain fatty acyl-CoA + AMP + diphosphate. It catalyses the reaction (5Z,8Z,11Z,14Z)-eicosatetraenoate + ATP + CoA = (5Z,8Z,11Z,14Z)-eicosatetraenoyl-CoA + AMP + diphosphate. The catalysed reaction is (9Z)-octadecenoate + ATP + CoA = (9Z)-octadecenoyl-CoA + AMP + diphosphate. It carries out the reaction hexadecanoate + ATP + CoA = hexadecanoyl-CoA + AMP + diphosphate. The enzyme catalyses (E)-hexadec-2-enoate + ATP + CoA = (2E)-hexadecenoyl-CoA + AMP + diphosphate. It catalyses the reaction a very long-chain fatty acid + ATP + CoA = a very long-chain fatty acyl-CoA + AMP + diphosphate. The catalysed reaction is tetracosanoate + ATP + CoA = tetracosanoyl-CoA + AMP + diphosphate. In terms of biological role, mediates the import of long-chain fatty acids (LCFA) into the cell by facilitating their transport across cell membranes. Appears to be the principal fatty acid transporter in small intestinal enterocytes. Also functions as an acyl-CoA ligase catalyzing the ATP-dependent formation of fatty acyl-CoA using LCFA and very-long-chain fatty acids (VLCFA) as substrates, which prevents fatty acid efflux from cells and might drive more fatty acid uptake. Plays a role in the formation of the epidermal barrier. Required for fat absorption in early embryogenesis. Probably involved in fatty acid transport across the blood barrier. Indirectly inhibits RPE65 via substrate competition and via production of VLCFA derivatives like lignoceroyl-CoA. Prevents light-induced degeneration of rods and cones. The chain is Long-chain fatty acid transport protein 4 (SLC27A4) from Pongo abelii (Sumatran orangutan).